A 556-amino-acid polypeptide reads, in one-letter code: MNRRLDNDRTIRAPRGRDISAKSWLTEAPLRMLMNNLDPDVAERPSELVVYGGIGRAARDWESFDRITAALRKLEDDETLLIQSGKPVGVFRTHADAPRVLIANSNIVPHWATLDHFNELDRKGLMMYGQMTAGSWIYIGSQGIVQGTYETFVEVGRRHYGGSLAGKWILTAGLGGMGGAQPLAATMAGASMLAVECQPSRIEMRLRTGYLDRQAATLDEALAIMEESAKTKKAISVGLLGNAAEIFPELVRRGVKPDIVTDQTSAHDPINGYLPKGWTLADWEAKRASDPKAVERASKTSMVEHVQAMLDFHAQGIPTLDYGNNIRQMAQDMGLKNAFDFPGFVPAYIRPLFCRGVGPFRWAALSGDPEDIFKTDAKVKELMPDDKHLHNWLDMARERIKFQGLPARICWVGLGDRHRLGLAFNEMVARGELKAPVVIGRDHLDSGSVASPNRETEAMKDGSDAVSDWPLLNALLNCASGATWVSLHHGGGVGIGYSQHAGMVIVADGTPEAAKRIARVLWNDPATGVMRHADAGYDIAIDCARDKGLDLPSLSK.

NAD(+)-binding positions include 52–53 (GG), Q130, 176–178 (GMG), E196, R201, 242–243 (NA), 263–267 (QTSAH), 273–274 (YL), and Y322. Residue C410 is part of the active site. Residue G492 coordinates NAD(+).

This sequence belongs to the urocanase family. It depends on NAD(+) as a cofactor.

It is found in the cytoplasm. The catalysed reaction is 4-imidazolone-5-propanoate = trans-urocanate + H2O. It participates in amino-acid degradation; L-histidine degradation into L-glutamate; N-formimidoyl-L-glutamate from L-histidine: step 2/3. Catalyzes the conversion of urocanate to 4-imidazolone-5-propionate. The protein is Urocanate hydratase of Bradyrhizobium diazoefficiens (strain JCM 10833 / BCRC 13528 / IAM 13628 / NBRC 14792 / USDA 110).